Reading from the N-terminus, the 534-residue chain is Allene oxide synthase 1, chloroplastic (534 aa).

Disordered stretches follow at residues 1 to 31 (MAST…SSYR) and 43 to 71 (EIPP…LPAQ). The N-terminal 69 residues, 1–69 (MASTSLSLPS…SPPVKQAKLP (69 aa)), are a transit peptide targeting the chloroplast. Composition is skewed to low complexity over residues 17 to 31 (SHTS…SSYR) and 43 to 62 (EIPP…SSPP). Lysine 149, histidine 180, and lysine 184 together coordinate heme b. Residues asparagine 337 and lysine 343 each coordinate (13S)-hydroperoxy-(9Z,11E)-octadecadienoate. Position 337 (asparagine 337) interacts with (13S)-hydroperoxy-(9Z,11E,15Z)-octadecatrienoate. Heme b is bound by residues lysine 485 and cysteine 487.

Belongs to the cytochrome P450 family. Heme b is required as a cofactor. As to expression, expressed in flowers. Detected in stems and roots, but not in leaves and fruits under non-inducing conditions.

The protein resides in the plastid. It localises to the chloroplast. The catalysed reaction is (13S)-hydroperoxy-(9Z,11E,15Z)-octadecatrienoate = (9Z,13S,15Z)-12,13-epoxyoctadeca-9,11,15-trienoate + H2O. It catalyses the reaction (13S)-hydroperoxy-(9Z,11E)-octadecadienoate = (9Z,13S)-12,13-epoxyoctadeca-9,11-dienoate + H2O. Its function is as follows. Cytochrome P450 of the CYP74A subfamily involved in the biosynthesis of jasmonic acid from lipoxygenase-derived hydroperoxides of free fatty acids. Catalyzes the synthesis of unstable allene oxide, which is further converted spontaneously by hydrolysis or cyclization. Can use 13S-hydroperoxy-9(Z),11(E),15(Z)-octadecatrienoic acid (13-HPOT) and 13S-hydroperoxy-9(Z),11(E)-octadecadienoic acid (13-HPOD) as substrates. The protein is Allene oxide synthase 1, chloroplastic of Solanum lycopersicum (Tomato).